The following is a 412-amino-acid chain: Phytoene synthase 1, chloroplastic (412 aa).

The N-terminal 129 residues, 1-129 (MSVALLWVVS…AYDRCGEVCA (129 aa)), are a transit peptide targeting the chloroplast.

Belongs to the phytoene/squalene synthase family. In terms of assembly, monomer. Interacts with SGR1.

It is found in the plastid. The protein resides in the chloroplast. It carries out the reaction 2 (2E,6E,10E)-geranylgeranyl diphosphate = 15-cis-phytoene + 2 diphosphate. It functions in the pathway carotenoid biosynthesis; phytoene biosynthesis; all-trans-phytoene from geranylgeranyl diphosphate: step 1/1. Catalyzes the reaction from prephytoene diphosphate to phytoene. The polypeptide is Phytoene synthase 1, chloroplastic (PSY1) (Solanum lycopersicum (Tomato)).